The following is a 127-amino-acid chain: Aspartate 1-decarboxylase (127 aa).

Ser25 functions as the Schiff-base intermediate with substrate; via pyruvic acid in the catalytic mechanism. Ser25 carries the post-translational modification Pyruvic acid (Ser). Thr57 provides a ligand contact to substrate. The active-site Proton donor is the Tyr58. 73–75 contacts substrate; the sequence is GAA.

Belongs to the PanD family. As to quaternary structure, heterooctamer of four alpha and four beta subunits. It depends on pyruvate as a cofactor. Post-translationally, is synthesized initially as an inactive proenzyme, which is activated by self-cleavage at a specific serine bond to produce a beta-subunit with a hydroxyl group at its C-terminus and an alpha-subunit with a pyruvoyl group at its N-terminus.

Its subcellular location is the cytoplasm. It catalyses the reaction L-aspartate + H(+) = beta-alanine + CO2. Its pathway is cofactor biosynthesis; (R)-pantothenate biosynthesis; beta-alanine from L-aspartate: step 1/1. Catalyzes the pyruvoyl-dependent decarboxylation of aspartate to produce beta-alanine. The sequence is that of Aspartate 1-decarboxylase from Clostridium kluyveri (strain NBRC 12016).